The sequence spans 162 residues: Probable chemoreceptor glutamine deamidase CheD (162 aa).

The protein belongs to the CheD family.

It carries out the reaction L-glutaminyl-[protein] + H2O = L-glutamyl-[protein] + NH4(+). Probably deamidates glutamine residues to glutamate on methyl-accepting chemotaxis receptors (MCPs), playing an important role in chemotaxis. The chain is Probable chemoreceptor glutamine deamidase CheD from Clostridium botulinum (strain Alaska E43 / Type E3).